The following is an 807-amino-acid chain: Serine/threonine-protein kinase AfsK (807 aa).

The Protein kinase domain maps to 16–272 (FEVLGRLGAG…QAQLAPHLFA (257 aa)). Residues 22–30 (LGAGGMGLV) and lysine 44 contribute to the ATP site. A Phosphoserine; by autocatalysis modification is found at serine 71. Aspartate 138 serves as the catalytic Proton acceptor. Threonine 168 is subject to Phosphothreonine; by autocatalysis. 2 disordered regions span residues 292–328 (MIER…HRLA) and 353–429 (AGPS…PSPA). Basic residues predominate over residues 297-315 (RGGRRTARRPPRPRPRRLR). Positions 353–363 (AGPSAAPDGGP) are enriched in low complexity.

Belongs to the protein kinase superfamily. Ser/Thr protein kinase family. Interacts (via the N-terminal kinase domain) with KbpA; the interaction prevents autophosphorylation of AfsK. Post-translationally, autophosphorylated mainly on threonine residues. Some phosphorylation on serine residues. Autophosphorylation on Thr-168 is the major site enhancing kinase activity towards AfsR, and is regulated though interaction with KbpA.

The catalysed reaction is L-seryl-[protein] + ATP = O-phospho-L-seryl-[protein] + ADP + H(+). The enzyme catalyses L-threonyl-[protein] + ATP = O-phospho-L-threonyl-[protein] + ADP + H(+). Its function is as follows. Component of the AfsK/AfsR system involved in the response of aerial mycelium formation to glucose. The chain is Serine/threonine-protein kinase AfsK (afsK) from Streptomyces griseus.